Consider the following 198-residue polypeptide: Probable chemoreceptor glutamine deamidase CheD (198 aa).

The protein belongs to the CheD family.

It catalyses the reaction L-glutaminyl-[protein] + H2O = L-glutamyl-[protein] + NH4(+). In terms of biological role, probably deamidates glutamine residues to glutamate on methyl-accepting chemotaxis receptors (MCPs), playing an important role in chemotaxis. In Stenotrophomonas maltophilia (strain R551-3), this protein is Probable chemoreceptor glutamine deamidase CheD.